A 1607-amino-acid polypeptide reads, in one-letter code: Putative molluscan insulin-related peptide(s) receptor (1607 aa).

Positions methionine 1–alanine 35 are cleaved as a signal peptide. 17 N-linked (GlcNAc...) asparagine glycosylation sites follow: asparagine 82, asparagine 188, asparagine 245, asparagine 275, asparagine 332, asparagine 343, asparagine 495, asparagine 520, asparagine 663, asparagine 710, asparagine 778, asparagine 796, asparagine 802, asparagine 868, asparagine 879, asparagine 940, and asparagine 953. Fibronectin type-III domains are found at residues histidine 517–phenylalanine 632, glutamate 636–glutamate 726, and leucine 756–serine 861. Residues glutamate 698–threonine 975 lie on the Extracellular side of the membrane. In terms of domain architecture, Fibronectin type-III 4 spans threonine 870 to proline 967. A helical transmembrane segment spans residues leucine 976–alanine 996. Topologically, residues cysteine 997–leucine 1607 are cytoplasmic. In terms of domain architecture, Protein kinase spans isoleucine 1037–leucine 1308. Residues leucine 1043–valine 1051 and lysine 1072 each bind ATP. Aspartate 1173 serves as the catalytic Proton acceptor. Position 1199 is a phosphotyrosine; by autocatalysis (tyrosine 1199). Disordered stretches follow at residues glycine 1328–glutamate 1352 and threonine 1501–tryptophan 1539. Polar residues predominate over residues asparagine 1503 to glutamate 1515. Low complexity predominate over residues serine 1524–serine 1538.

It belongs to the protein kinase superfamily. Tyr protein kinase family. Insulin receptor subfamily. In terms of assembly, probable tetramer of 2 alpha and 2 beta chains linked by disulfide bonds. The alpha chains contribute to the formation of the ligand-binding domain, while the beta chains carry the kinase domain. It depends on Mn(2+) as a cofactor.

Its subcellular location is the membrane. The catalysed reaction is L-tyrosyl-[protein] + ATP = O-phospho-L-tyrosyl-[protein] + ADP + H(+). Its function is as follows. This receptor probably binds to the four different molluscan insulin-related peptides and has a tyrosine-protein kinase activity. This chain is Putative molluscan insulin-related peptide(s) receptor, found in Lymnaea stagnalis (Great pond snail).